Consider the following 325-residue polypeptide: ATP synthase gamma chain (325 aa).

The protein belongs to the ATPase gamma chain family. In terms of assembly, F-type ATPases have 2 components, CF(1) - the catalytic core - and CF(0) - the membrane proton channel. CF(1) has five subunits: alpha(3), beta(3), gamma(1), delta(1), epsilon(1). CF(0) has three main subunits: a, b and c.

The protein localises to the cell membrane. In terms of biological role, produces ATP from ADP in the presence of a proton gradient across the membrane. The gamma chain is believed to be important in regulating ATPase activity and the flow of protons through the CF(0) complex. This Corynebacterium diphtheriae (strain ATCC 700971 / NCTC 13129 / Biotype gravis) protein is ATP synthase gamma chain.